The primary structure comprises 109 residues: DNA-binding protein MJ0691 (109 aa).

This sequence belongs to the PDCD5 family.

The sequence is that of DNA-binding protein MJ0691 from Methanocaldococcus jannaschii (strain ATCC 43067 / DSM 2661 / JAL-1 / JCM 10045 / NBRC 100440) (Methanococcus jannaschii).